We begin with the raw amino-acid sequence, 128 residues long: Large ribosomal subunit protein bL20c (128 aa).

This sequence belongs to the bacterial ribosomal protein bL20 family.

Its subcellular location is the plastid. It localises to the chloroplast. Functionally, binds directly to 23S ribosomal RNA and is necessary for the in vitro assembly process of the 50S ribosomal subunit. It is not involved in the protein synthesizing functions of that subunit. In Nicotiana sylvestris (Wood tobacco), this protein is Large ribosomal subunit protein bL20c.